The following is an 883-amino-acid chain: Bifunctional heparan sulfate N-deacetylase/N-sulfotransferase 2 (883 aa).

Residues 1-18 (MLQLWKVVRPARQLELHR) lie on the Cytoplasmic side of the membrane. A helical; Signal-anchor for type II membrane protein membrane pass occupies residues 19 to 39 (LILLLIGFSLVSMGFLAYYVS). At 40 to 883 (TSPKAKEPLP…REELQHSSVG (844 aa)) the chain is on the lumenal side. The interval 41-597 (SPKAKEPLPL…KRHKDIWSKE (557 aa)) is heparan sulfate N-deacetylase 2. Residues 49-82 (PLPLGDCSSSGAAGPGPARPPVPPRPQRPPETTR) form a disordered region. Pro residues predominate over residues 65–77 (PARPPVPPRPQRP). Residues N233, N350, and N400 are each glycosylated (N-linked (GlcNAc...) asparagine). A heparan sulfate N-sulfotransferase 2 region spans residues 598 to 883 (KTCDRLPKFL…REELQHSSVG (286 aa)). The active-site For sulfotransferase activity is K613. 3'-phosphoadenylyl sulfate is bound at residue 613 to 617 (KTGTT). N-linked (GlcNAc...) asparagine glycosylation occurs at N666. A 3'-phosphoadenylyl sulfate-binding site is contributed by S711. Residues N726 and N802 are each glycosylated (N-linked (GlcNAc...) asparagine). Cysteines 817 and 827 form a disulfide. 832–836 (KGRRY) is a binding site for 3'-phosphoadenylyl sulfate.

Belongs to the sulfotransferase 1 family. NDST subfamily. As to quaternary structure, monomer. Widely expressed in adult and throughout development.

It localises to the golgi apparatus membrane. It catalyses the reaction alpha-D-glucosaminyl-[heparan sulfate](n) + 3'-phosphoadenylyl sulfate = N-sulfo-alpha-D-glucosaminyl-[heparan sulfate](n) + adenosine 3',5'-bisphosphate + 2 H(+). Its pathway is glycan metabolism; heparan sulfate biosynthesis. The protein operates within glycan metabolism; heparin biosynthesis. Functionally, essential bifunctional enzyme that catalyzes both the N-deacetylation and the N-sulfation of glucosamine (GlcNAc) of the glycosaminoglycan in heparan sulfate. Modifies the GlcNAc-GlcA disaccharide repeating sugar backbone to make N-sulfated heparosan, a prerequisite substrate for later modifications in heparin biosynthesis. Plays a role in determining the extent and pattern of sulfation of heparan sulfate. Required for the exosomal release of SDCBP, CD63 and syndecan. The chain is Bifunctional heparan sulfate N-deacetylase/N-sulfotransferase 2 (Ndst2) from Mus musculus (Mouse).